A 156-amino-acid chain; its full sequence is Arginine repressor (156 aa).

It belongs to the ArgR family.

It is found in the cytoplasm. It participates in amino-acid biosynthesis; L-arginine biosynthesis [regulation]. Its function is as follows. Regulates arginine biosynthesis genes. This is Arginine repressor from Tolumonas auensis (strain DSM 9187 / NBRC 110442 / TA 4).